The primary structure comprises 723 residues: Peroxisomal bifunctional enzyme (723 aa).

The segment at 1–282 (MAEYTRLHNA…LAERKANKWS (282 aa)) is enoyl-CoA hydratase / isomerase. An N6-succinyllysine modification is found at Lys-38. Gly-101 is a binding site for substrate. The residue at position 165 (Lys-165) is an N6-acetyllysine; alternate. Lys-165 carries the post-translational modification N6-succinyllysine; alternate. Lys-171 bears the N6-acetyllysine mark. Lys-219 bears the N6-acetyllysine; alternate mark. Position 219 is an N6-succinyllysine; alternate (Lys-219). Lys-250 carries the N6-acetyllysine modification. 2 positions are modified to N6-succinyllysine: Lys-280 and Lys-290. Residues 283–572 (TPSGASWKTA…DVLCELGRFG (290 aa)) are 3-hydroxyacyl-CoA dehydrogenase. N6-acetyllysine is present on residues Lys-346, Lys-350, and Lys-464. At Lys-532 the chain carries N6-succinyllysine. Thr-548 is subject to Phosphothreonine. Lys-577 carries the N6-succinyllysine modification. N6-acetyllysine; alternate occurs at positions 584, 591, and 710. N6-succinyllysine; alternate occurs at positions 584, 591, and 710. Positions 699–723 (KKLASQGNPPQKEWQSLAGSPSSKL) are disordered. The segment covering 703–723 (SQGNPPQKEWQSLAGSPSSKL) has biased composition (polar residues). Ser-718 bears the Phosphoserine mark. The short motif at 721 to 723 (SKL) is the Microbody targeting signal element. Position 722 is an N6-succinyllysine (Lys-722).

In the N-terminal section; belongs to the enoyl-CoA hydratase/isomerase family. This sequence in the C-terminal section; belongs to the 3-hydroxyacyl-CoA dehydrogenase family. In terms of assembly, monomer. Acetylated, leading to enhanced enzyme activity. Acetylation is enhanced by up to 80% after treatment either with trichostin A (TSA) or with nicotinamide (NAM) with highest increase on Lys-346. Acetylation and enzyme activity increased by about 1.5% on addition of fatty acids.

The protein resides in the peroxisome. The catalysed reaction is a (3S)-3-hydroxyacyl-CoA = a (2E)-enoyl-CoA + H2O. It catalyses the reaction a 4-saturated-(3S)-3-hydroxyacyl-CoA = a (3E)-enoyl-CoA + H2O. It carries out the reaction a (3Z)-enoyl-CoA = a 4-saturated (2E)-enoyl-CoA. The enzyme catalyses a (3E)-enoyl-CoA = a 4-saturated (2E)-enoyl-CoA. The catalysed reaction is a (3S)-3-hydroxyacyl-CoA + NAD(+) = a 3-oxoacyl-CoA + NADH + H(+). It catalyses the reaction (2S,3S)-3-hydroxy-2-methylbutanoyl-CoA = (2E)-2-methylbut-2-enoyl-CoA + H2O. It carries out the reaction (3S)-hydroxyhexadecanoyl-CoA + NAD(+) = 3-oxohexadecanoyl-CoA + NADH + H(+). The enzyme catalyses (3S)-hydroxyhexadecanoyl-CoA = (2E)-hexadecenoyl-CoA + H2O. The catalysed reaction is (2E)-hexadecenedioyl-CoA + H2O = (3S)-hydroxyhexadecanedioyl-CoA. It catalyses the reaction (3S)-hydroxyhexadecanedioyl-CoA + NAD(+) = 3-oxohexadecanedioyl-CoA + NADH + H(+). It carries out the reaction (3E,5Z)-tetradecadienoyl-CoA = (2E,5Z)-tetradecadienoyl-CoA. The enzyme catalyses (3E,5Z)-octadienoyl-CoA = (2E,5Z)-octadienoyl-CoA. The catalysed reaction is (3S)-hydroxydecanoyl-CoA + NAD(+) = 3-oxodecanoyl-CoA + NADH + H(+). It catalyses the reaction (3E)-decenoyl-CoA = (2E)-decenoyl-CoA. It carries out the reaction (3Z)-hexenoyl-CoA = (2E)-hexenoyl-CoA. The enzyme catalyses (3E)-hexenoyl-CoA = (2E)-hexenoyl-CoA. The catalysed reaction is (3S)-hydroxydecanoyl-CoA = (2E)-decenoyl-CoA + H2O. It catalyses the reaction (3S)-hydroxyhexanoyl-CoA = (2E)-hexenoyl-CoA + H2O. It participates in lipid metabolism; fatty acid beta-oxidation. Its activity is regulated as follows. Enzyme activity enhanced by acetylation. In terms of biological role, peroxisomal trifunctional enzyme possessing 2-enoyl-CoA hydratase, 3-hydroxyacyl-CoA dehydrogenase, and delta 3, delta 2-enoyl-CoA isomerase activities. Catalyzes two of the four reactions of the long chain fatty acids peroxisomal beta-oxidation pathway. Can also use branched-chain fatty acids such as 2-methyl-2E-butenoyl-CoA as a substrate, which is hydrated into (2S,3S)-3-hydroxy-2-methylbutanoyl-CoA. Optimal isomerase for 2,5 double bonds into 3,5 form isomerization in a range of enoyl-CoA species. Also able to isomerize both 3-cis and 3-trans double bonds into the 2-trans form in a range of enoyl-CoA species. Regulates the amount of medium-chain dicarboxylic fatty acids which are essential regulators of all fatty acid oxidation pathways. Also involved in the degradation of long-chain dicarboxylic acids through peroxisomal beta-oxidation. The protein is Peroxisomal bifunctional enzyme (EHHADH) of Pongo abelii (Sumatran orangutan).